The chain runs to 207 residues: Guanylate kinase (207 aa).

The region spanning 6–185 is the Guanylate kinase-like domain; that stretch reads GLLIVLSGPS…AKNRIQCIVE (180 aa). An ATP-binding site is contributed by 13–20; it reads GPSGVGKG.

Belongs to the guanylate kinase family.

Its subcellular location is the cytoplasm. It catalyses the reaction GMP + ATP = GDP + ADP. In terms of biological role, essential for recycling GMP and indirectly, cGMP. The chain is Guanylate kinase from Staphylococcus aureus (strain USA300).